The primary structure comprises 170 residues: Adenine phosphoribosyltransferase (170 aa).

Belongs to the purine/pyrimidine phosphoribosyltransferase family. Homodimer.

Its subcellular location is the cytoplasm. The enzyme catalyses AMP + diphosphate = 5-phospho-alpha-D-ribose 1-diphosphate + adenine. It participates in purine metabolism; AMP biosynthesis via salvage pathway; AMP from adenine: step 1/1. Functionally, catalyzes a salvage reaction resulting in the formation of AMP, that is energically less costly than de novo synthesis. The polypeptide is Adenine phosphoribosyltransferase (Bacillus pumilus (strain SAFR-032)).